Consider the following 468-residue polypeptide: ATP synthase subunit beta (468 aa).

155 to 162 (GGAGVGKT) is an ATP binding site.

Belongs to the ATPase alpha/beta chains family. In terms of assembly, F-type ATPases have 2 components, CF(1) - the catalytic core - and CF(0) - the membrane proton channel. CF(1) has five subunits: alpha(3), beta(3), gamma(1), delta(1), epsilon(1). CF(0) has three main subunits: a(1), b(2) and c(9-12). The alpha and beta chains form an alternating ring which encloses part of the gamma chain. CF(1) is attached to CF(0) by a central stalk formed by the gamma and epsilon chains, while a peripheral stalk is formed by the delta and b chains.

The protein localises to the cell membrane. It catalyses the reaction ATP + H2O + 4 H(+)(in) = ADP + phosphate + 5 H(+)(out). Its function is as follows. Produces ATP from ADP in the presence of a proton gradient across the membrane. The catalytic sites are hosted primarily by the beta subunits. This is ATP synthase subunit beta from Streptococcus gordonii (strain Challis / ATCC 35105 / BCRC 15272 / CH1 / DL1 / V288).